Reading from the N-terminus, the 294-residue chain is Elongation factor Ts (294 aa).

Positions 78 to 81 are involved in Mg(2+) ion dislocation from EF-Tu; that stretch reads TDFV.

This sequence belongs to the EF-Ts family.

It localises to the cytoplasm. Its function is as follows. Associates with the EF-Tu.GDP complex and induces the exchange of GDP to GTP. It remains bound to the aminoacyl-tRNA.EF-Tu.GTP complex up to the GTP hydrolysis stage on the ribosome. This Mycoplasma mobile (strain ATCC 43663 / 163K / NCTC 11711) (Mesomycoplasma mobile) protein is Elongation factor Ts.